Consider the following 948-residue polypeptide: Phosphatidylinositol-glycan-specific phospholipase D (948 aa).

The signal sequence occupies residues 1 to 24; it reads MKNKIILLWLLLIVILCTISNVKG. Residues Asn39, Asn78, Asn148, Asn300, Asn433, Asn452, Asn506, and Asn535 are each glycosylated (N-linked (GlcNAc...) asparagine). FG-GAP repeat units lie at residues 451 to 512, 526 to 588, 596 to 656, and 663 to 724; these read TNFT…SVTI, QVAT…NPAG, LPSI…RISG, and DADY…LNSF. Residues Asn749 and Asn788 are each glycosylated (N-linked (GlcNAc...) asparagine). FG-GAP repeat units lie at residues 799 to 861 and 895 to 948; these read NLLL…LTND and SSGG…NIFQ.

It belongs to the GPLD1 family. It depends on Ca(2+) as a cofactor.

The protein resides in the secreted. The catalysed reaction is a 6-(alpha-D-glucosaminyl)-1-(1,2-diacyl-sn-glycero-3-phospho)-1D-myo-inositol + H2O = 6-(alpha-D-glucosaminyl)-1D-myo-inositol + a 1,2-diacyl-sn-glycero-3-phosphate + H(+). In terms of biological role, hydrolyzes the inositol phosphate linkage in proteins anchored by phosphatidylinositol glycans (GPI-anchor) thus releasing these proteins from the membrane. May also cleave GPI anchor intermediates intracellularly. This chain is Phosphatidylinositol-glycan-specific phospholipase D (pldG), found in Dictyostelium discoideum (Social amoeba).